The following is a 358-amino-acid chain: scyllo-inositol 2-dehydrogenase (NADP(+)) IolW (358 aa).

It belongs to the Gfo/Idh/MocA family.

The enzyme catalyses scyllo-inositol + NADP(+) = scyllo-inosose + NADPH + H(+). Catalyzes the reversible NADPH-dependent reduction of scyllo-inosose (SIS) to scyllo-inositol (SI). Cannot use NADH instead of NADPH. May be involved in reduction of not only SIS but also various oxidized compounds manifested upon stressful conditions. This is scyllo-inositol 2-dehydrogenase (NADP(+)) IolW from Bacillus subtilis (strain 168).